A 179-amino-acid chain; its full sequence is MKAGPLQLGVVPPANRAIAILDFFLRPIAIVGTLASAIAMATTNQTLPFFSQFIRFRAKFNDLPSFTFFVVASSIVSAYLILSLGFSILHIAKSNLVNSRVLLLLLDTAAMGLLMAGSAAATAIVQLAHKGNNKVNWFAICQQYNSFCKRVSGSLIGSYAGVVVLILLILLSGVALSRR.

Residues 1 to 17 (MKAGPLQLGVVPPANRA) lie on the Cytoplasmic side of the membrane. A helical membrane pass occupies residues 18–38 (IAILDFFLRPIAIVGTLASAI). At 39–67 (AMATTNQTLPFFSQFIRFRAKFNDLPSFT) the chain is on the extracellular side. N-linked (GlcNAc...) asparagine glycosylation occurs at Asn44. The chain crosses the membrane as a helical span at residues 68–88 (FFVVASSIVSAYLILSLGFSI). The Cytoplasmic segment spans residues 89 to 100 (LHIAKSNLVNSR). Residues 101–121 (VLLLLLDTAAMGLLMAGSAAA) form a helical membrane-spanning segment. Over 122–154 (TAIVQLAHKGNNKVNWFAICQQYNSFCKRVSGS) the chain is Extracellular. The helical transmembrane segment at 155–175 (LIGSYAGVVVLILLILLSGVA) threads the bilayer. The Cytoplasmic segment spans residues 176–179 (LSRR).

This sequence belongs to the Casparian strip membrane proteins (CASP) family. In terms of assembly, homodimer and heterodimers.

It localises to the cell membrane. Functionally, regulates membrane-cell wall junctions and localized cell wall deposition. Required for establishment of the Casparian strip membrane domain (CSD) and the subsequent formation of Casparian strips, a cell wall modification of the root endodermis that determines an apoplastic barrier between the intraorganismal apoplasm and the extraorganismal apoplasm and prevents lateral diffusion. The sequence is that of Casparian strip membrane protein 1 from Lactuca sativa (Garden lettuce).